The following is a 443-amino-acid chain: Leucine/methionine racemase (443 aa).

Residues 110–111 (GS) and Q247 each bind pyridoxal 5'-phosphate. The residue at position 273 (K273) is an N6-(pyridoxal phosphate)lysine. T302 contributes to the pyridoxal 5'-phosphate binding site.

Belongs to the class-III pyridoxal-phosphate-dependent aminotransferase family. Pyridoxal 5'-phosphate is required as a cofactor.

It catalyses the reaction L-leucine = D-leucine. The enzyme catalyses L-methionine = D-methionine. Activity is strongly inhibited by several metal ions, including Co(2+), Zn(2+), Ni(2+), Cu(2+) and Fe(3+), and nonsubstrate amino acids such as L-arginine and L-lysine. Activity is completely abolished in the presence of hydroxylamine, an inhibitor of pyridoxal phosphate-dependent enzymes. Its function is as follows. Amino acid racemase with moderate substrate specificity. Is primarily active toward leucine, which is the preferred substrate, and methionine. Also exhibits lower levels of activity toward phenylalanine, alanine and serine. The polypeptide is Leucine/methionine racemase (Thermococcus litoralis (strain ATCC 51850 / DSM 5473 / JCM 8560 / NS-C)).